We begin with the raw amino-acid sequence, 359 residues long: MSELVADPTGRAVLRAVAPGTELRDGLERILRGRTGALIVLGYDEVVEEMCSGGFVLDVAFSATRLRELAKMDGAIVLDRGATRVLRAAVQLLPDAAIETGESGTRHRTAERAAKQTGFPVISVSQSMRIVAIYSDGRRWVLEDSDAILSRANQALATLERYKSRLDEVSGTLSALEIEDLVTVRDVASVVQRLEMVRRISVEIAGYVDELGTDGRLLSLQLDELIGNVGPERELVVSDYVDARRAAALDDVLAGLARLDSTDLIDLVKIAQVRGLGGPGGDALDSAVGPRGHRMLSKIPRLPSPVIGAMVDHFGTLQKMLSASVEDLQLVDGVGALRARSVREGLSRLAESSLLERFV.

The DAC domain maps to 7-145 (DPTGRAVLRA…DGRRWVLEDS (139 aa)). Residues glycine 74, leucine 92, and 105 to 109 (TRHRT) each bind ATP.

This sequence belongs to the DisA family. In terms of assembly, homooctamer. Mg(2+) is required as a cofactor.

The enzyme catalyses 2 ATP = 3',3'-c-di-AMP + 2 diphosphate. Its function is as follows. Participates in a DNA-damage check-point. DisA forms globular foci that rapidly scan along the chromosomes searching for lesions. In terms of biological role, also has diadenylate cyclase activity, catalyzing the condensation of 2 ATP molecules into cyclic di-AMP (c-di-AMP). c-di-AMP likely acts as a signaling molecule that may couple DNA integrity with a cellular process. This chain is DNA integrity scanning protein DisA, found in Beutenbergia cavernae (strain ATCC BAA-8 / DSM 12333 / CCUG 43141 / JCM 11478 / NBRC 16432 / NCIMB 13614 / HKI 0122).